A 401-amino-acid chain; its full sequence is MATKRSVGTLGEADLKGKKVFVRADLNVPLDDAQKITDDTRIRASIPTIKYLLEKGAKVILASHLGRPKGVTPKFSLKPLVARLSELLGLEVVMAPDCIGEEVEKLAAALPDGGVLLLENVRFYKEEEKNDPEFAKKLASVADLYVNDAFGTAHRAHASTEGVTKFLRPSVAGFLMQKELDYLVGAVANPKKPFAAIVGGSKVSSKIGVIESLLAKVDILILGGGMIFTFYKAQGLAVGKSLVEEDKLELATSLIETAKSKGVKLLLPTDVVVADKFAADAESKIVPATAIPDGWMGLDVGPDSIKTFAEALDTTKTVIWNGPMGVFEFEKFAAGTDAIAKQLAELTGKGVTTIIGGGDSVAAVEKAGLADKMSHISTGGGASLELLEGKPLPGVLALDEA.

(2R)-3-phosphoglycerate is bound by residues alanine 24, aspartate 25, asparagine 27, arginine 41, serine 63, histidine 64, glycine 66, arginine 67, arginine 122, histidine 154, and arginine 155. Glycine 200 lines the ADP pocket. A CDP-binding site is contributed by glycine 200. AMP-binding residues include lysine 202 and lysine 206. Position 206 (lysine 206) interacts with ATP. Residue glycine 224 coordinates ADP. Glycine 224 is a binding site for CDP. AMP contacts are provided by glycine 225 and glycine 297. Glycine 225 and glycine 297 together coordinate ATP. Residues glycine 322 and phenylalanine 327 each coordinate CDP. Phenylalanine 327 serves as a coordination point for ADP. Glutamate 328 contacts AMP. Positions 328, 359, and 360 each coordinate ATP. Aspartate 359 lines the Mg(2+) pocket.

This sequence belongs to the phosphoglycerate kinase family. As to quaternary structure, monomer. The cofactor is Mg(2+).

The protein resides in the cytoplasm. The catalysed reaction is (2R)-3-phosphoglycerate + ATP = (2R)-3-phospho-glyceroyl phosphate + ADP. The protein operates within carbohydrate degradation; glycolysis; pyruvate from D-glyceraldehyde 3-phosphate: step 2/5. The sequence is that of Phosphoglycerate kinase, cytosolic from Triticum aestivum (Wheat).